Consider the following 491-residue polypeptide: Ketol-acid reductoisomerase (NADP(+)) (491 aa).

The 194-residue stretch at 15 to 208 (AQLGKCRFMG…GGHRAGVLES (194 aa)) folds into the KARI N-terminal Rossmann domain. NADP(+)-binding positions include 45-48 (CGAQ), Arg68, Arg76, Ser78, and 108-110 (DKQ). Residue His132 is part of the active site. An NADP(+)-binding site is contributed by Gly158. KARI C-terminal knotted domains lie at 209–344 (SFVA…TAPQ) and 345–484 (FEGK…MTDM). The Mg(2+) site is built by Asp217, Glu221, Glu389, and Glu393. Ser414 is a substrate binding site.

This sequence belongs to the ketol-acid reductoisomerase family. The cofactor is Mg(2+).

The catalysed reaction is (2R)-2,3-dihydroxy-3-methylbutanoate + NADP(+) = (2S)-2-acetolactate + NADPH + H(+). It catalyses the reaction (2R,3R)-2,3-dihydroxy-3-methylpentanoate + NADP(+) = (S)-2-ethyl-2-hydroxy-3-oxobutanoate + NADPH + H(+). It participates in amino-acid biosynthesis; L-isoleucine biosynthesis; L-isoleucine from 2-oxobutanoate: step 2/4. The protein operates within amino-acid biosynthesis; L-valine biosynthesis; L-valine from pyruvate: step 2/4. In terms of biological role, involved in the biosynthesis of branched-chain amino acids (BCAA). Catalyzes an alkyl-migration followed by a ketol-acid reduction of (S)-2-acetolactate (S2AL) to yield (R)-2,3-dihydroxy-isovalerate. In the isomerase reaction, S2AL is rearranged via a Mg-dependent methyl migration to produce 3-hydroxy-3-methyl-2-ketobutyrate (HMKB). In the reductase reaction, this 2-ketoacid undergoes a metal-dependent reduction by NADPH to yield (R)-2,3-dihydroxy-isovalerate. This chain is Ketol-acid reductoisomerase (NADP(+)), found in Salmonella choleraesuis (strain SC-B67).